The chain runs to 1255 residues: Protein diaphanous homolog 1 (1255 aa).

Met1 carries the post-translational modification N-acetylmethionine. The segment covering 1–12 has biased composition (gly residues); that stretch reads MEPSGGGLGPGR. The tract at residues 1 to 73 is disordered; sequence MEPSGGGLGP…ASYGDDPTAQ (73 aa). Ser22 is subject to Phosphoserine. Residues 58–73 show a composition bias toward polar residues; that stretch reads AHRNSSASYGDDPTAQ. A GBD/FH3 domain is found at 75 to 440; that stretch reads LQDISDEQVL…QIVLHKNGTD (366 aa). Residues 460-562 adopt a coiled-coil conformation; that stretch reads IDKTKVEKSE…MASLSAVVVA (103 aa). A disordered region spans residues 567 to 737; it reads SSAAVPPAPP…MGVPPPPPFG (171 aa). A compositionally biased stretch (pro residues) spans 585–736; the sequence is IPPPPPPPPL…GMGVPPPPPF (152 aa). Residues 586 to 747 form the FH1 domain; that stretch reads PPPPPPPPLP…FGVPAAPVLP (162 aa). A Phosphothreonine modification is found at Thr751. The 403-residue stretch at 752 to 1154 folds into the FH2 domain; sequence PKKVYKPEVQ…MRRAKLAKEK (403 aa). Residues 1027 to 1179 are a coiled coil; the sequence is VEKASRVSAE…IDMNAEGDET (153 aa). Lys1040 and Lys1086 each carry N6-acetyllysine. A Phosphotyrosine modification is found at Tyr1104. A DAD domain is found at 1177–1205; it reads DETGVMDSLLEALQSGAAFRRKRGPRQVN. Ser1237 carries the post-translational modification Phosphoserine.

It belongs to the formin homology family. Diaphanous subfamily. In terms of assembly, homodimer. Interacts with the GTP-bound form of RHOA. Interacts with RHOC, PFY1, MAPRE1, BAIAP2 and APC. Interacts with APC; acts as a scaffold protein for MAPRE1 and APC to stabilize microtubules and promote cell migration. Interacts with SCAI. Interacts with DCAF7, via FH2 domain. Interacts with NCDN. Interacts with OSBPL10, OSBPL2, VIM, TUBB and DYN1. Post-translationally, phosphorylation at Thr-751 is stimulated by cAMP and regulates stability, complex formation and mitochondrial movement. Widely expressed. In the organ of Corti, it is expressed at the outer and inner hair cell layers. Expression at the inner hair cell layer is restricted to inner pillar cells. Detected in cochlear spiral ganglion neurons.

The protein localises to the cell membrane. Its subcellular location is the cell projection. It is found in the ruffle membrane. It localises to the cytoplasm. The protein resides in the cytoskeleton. The protein localises to the microtubule organizing center. Its subcellular location is the centrosome. It is found in the spindle. It localises to the nucleus. Actin nucleation and elongation factor required for the assembly of F-actin structures, such as actin cables and stress fibers. Binds to the barbed end of the actin filament and slows down actin polymerization and depolymerization. Required for cytokinesis, and transcriptional activation of the serum response factor. DFR proteins couple Rho and Src tyrosine kinase during signaling and the regulation of actin dynamics. Functions as a scaffold protein for MAPRE1 and APC to stabilize microtubules and promote cell migration. Has neurite outgrowth promoting activity. Acts in a Rho-dependent manner to recruit PFY1 to the membrane. The MEMO1-RHOA-DIAPH1 signaling pathway plays an important role in ERBB2-dependent stabilization of microtubules at the cell cortex. It controls the localization of APC and CLASP2 to the cell membrane, via the regulation of GSK3B activity. In turn, membrane-bound APC allows the localization of the MACF1 to the cell membrane, which is required for microtubule capture and stabilization. Plays a role in the regulation of cell morphology and cytoskeletal organization. Required in the control of cell shape. Also acts as an actin nucleation and elongation factor in the nucleus by promoting nuclear actin polymerization inside the nucleus to drive serum-dependent SRF-MRTFA activity. This is Protein diaphanous homolog 1 (Diaph1) from Mus musculus (Mouse).